Here is a 563-residue protein sequence, read N- to C-terminus: Putative cytochrome c oxidase subunit 1-beta (563 aa).

A run of 7 helical transmembrane segments spans residues 34 to 54 (IGHL…VMAL), 76 to 96 (LFTL…FAGF), 117 to 137 (MLSY…LAVP), 164 to 184 (MWIM…VNFL), 208 to 228 (LFTS…LLVL), 252 to 272 (LFWF…FGII), and 284 to 304 (IFGY…SVVV). Position 80 (His-80) interacts with Fe(II)-heme a. Cu cation is bound by residues His-258 and Tyr-262. The segment at residues 258–262 (HPEVY) is a cross-link (1'-histidyl-3'-tyrosine (His-Tyr)). Residues His-307 and His-308 each coordinate Cu cation. A run of 2 helical transmembrane segments spans residues 309–329 (MFAT…LIAV) and 353–373 (MLWA…GVIL). A heme a3-binding site is contributed by His-391. A run of 3 helical transmembrane segments spans residues 392–412 (FHYV…YFWW), 427–447 (IHFW…HWLG), and 470–490 (LSTI…YNVW). His-393 contacts Fe(II)-heme a. Positions 536-563 (AFDLHHPAHAGEAPQPEPKHEQADREPS) are disordered. The segment covering 552-563 (EPKHEQADREPS) has biased composition (basic and acidic residues).

It belongs to the heme-copper respiratory oxidase family. In terms of assembly, associates with subunits II, III and IV to form cytochrome c oxidase. Cu(2+) is required as a cofactor. Heme serves as cofactor.

The protein resides in the cell membrane. The catalysed reaction is 4 Fe(II)-[cytochrome c] + O2 + 8 H(+)(in) = 4 Fe(III)-[cytochrome c] + 2 H2O + 4 H(+)(out). It participates in energy metabolism; oxidative phosphorylation. In terms of biological role, cytochrome c oxidase is the component of the respiratory chain that catalyzes the reduction of oxygen to water. Subunits 1-3 form the functional core of the enzyme complex. CO I is the catalytic subunit of the enzyme. Electrons originating in cytochrome c are transferred via the copper A center of subunit 2 and heme A of subunit 1 to the bimetallic center formed by heme A3 and copper B. The polypeptide is Putative cytochrome c oxidase subunit 1-beta (ctaD2) (Streptomyces avermitilis (strain ATCC 31267 / DSM 46492 / JCM 5070 / NBRC 14893 / NCIMB 12804 / NRRL 8165 / MA-4680)).